The primary structure comprises 306 residues: Ribose-5-phosphate isomerase (306 aa).

A disordered region spans residues 45-68 (GRAQFGVGSTSTSSGDANSVCPAP). Over residues 51–61 (VGSTSTSSGDA) the composition is skewed to polar residues. S102 carries the phosphoserine modification.

It belongs to the ribose 5-phosphate isomerase family.

It carries out the reaction aldehydo-D-ribose 5-phosphate = D-ribulose 5-phosphate. Its pathway is carbohydrate degradation; pentose phosphate pathway; D-ribose 5-phosphate from D-ribulose 5-phosphate (non-oxidative stage): step 1/1. This Sus scrofa (Pig) protein is Ribose-5-phosphate isomerase.